Here is a 156-residue protein sequence, read N- to C-terminus: ATP synthase subunit b (156 aa).

Residues 7–29 (LLGQAIAFFFFVTFCMKYVWPPL) traverse the membrane as a helical segment.

The protein belongs to the ATPase B chain family. F-type ATPases have 2 components, F(1) - the catalytic core - and F(0) - the membrane proton channel. F(1) has five subunits: alpha(3), beta(3), gamma(1), delta(1), epsilon(1). F(0) has three main subunits: a(1), b(2) and c(10-14). The alpha and beta chains form an alternating ring which encloses part of the gamma chain. F(1) is attached to F(0) by a central stalk formed by the gamma and epsilon chains, while a peripheral stalk is formed by the delta and b chains.

The protein resides in the cell inner membrane. Functionally, f(1)F(0) ATP synthase produces ATP from ADP in the presence of a proton or sodium gradient. F-type ATPases consist of two structural domains, F(1) containing the extramembraneous catalytic core and F(0) containing the membrane proton channel, linked together by a central stalk and a peripheral stalk. During catalysis, ATP synthesis in the catalytic domain of F(1) is coupled via a rotary mechanism of the central stalk subunits to proton translocation. Its function is as follows. Component of the F(0) channel, it forms part of the peripheral stalk, linking F(1) to F(0). The chain is ATP synthase subunit b from Photobacterium profundum (strain SS9).